Consider the following 1213-residue polypeptide: DNA-directed RNA polymerase subunit beta' (1213 aa).

Zn(2+) contacts are provided by cysteine 60, cysteine 62, cysteine 75, and cysteine 78. Positions 449, 451, and 453 each coordinate Mg(2+). The Zn(2+) site is built by cysteine 818, cysteine 892, cysteine 899, and cysteine 902.

Belongs to the RNA polymerase beta' chain family. As to quaternary structure, the RNAP catalytic core consists of 2 alpha, 1 beta, 1 beta' and 1 omega subunit. When a sigma factor is associated with the core the holoenzyme is formed, which can initiate transcription. Mg(2+) serves as cofactor. It depends on Zn(2+) as a cofactor.

It catalyses the reaction RNA(n) + a ribonucleoside 5'-triphosphate = RNA(n+1) + diphosphate. In terms of biological role, DNA-dependent RNA polymerase catalyzes the transcription of DNA into RNA using the four ribonucleoside triphosphates as substrates. The polypeptide is DNA-directed RNA polymerase subunit beta' (Lactiplantibacillus plantarum (strain ATCC BAA-793 / NCIMB 8826 / WCFS1) (Lactobacillus plantarum)).